The sequence spans 152 residues: MNNSMILLMVIASFVAGYLSTMNLWANSIGDIRLHLNDFYMVLLMVGWMIVMCYILMKSHMGITKTQLIITITIIIIIVYAIRTQAFIDDKQYLNGMIPHHSMAITMSKWIVNRTKDPRIKQLATDIIISQQNEINEMNSILDERKLQNKVF.

N2 carries N-linked (GlcNAc...) asparagine; by host glycosylation. The next 3 helical transmembrane spans lie at 5–25 (MILL…MNLW), 36–56 (LNDF…CYIL), and 68–88 (LIIT…QAFI). A glycan (N-linked (GlcNAc...) asparagine; by host) is linked at N113.

It is found in the membrane. This is an uncharacterized protein from Acanthamoeba polyphaga mimivirus (APMV).